Reading from the N-terminus, the 842-residue chain is Leucine--tRNA ligase (842 aa).

The 'HIGH' region signature appears at 44–55 (PYPSANGLHVGH). A 'KMSKS' region motif is present at residues 619-623 (KMSKS). Lys622 lines the ATP pocket.

The protein belongs to the class-I aminoacyl-tRNA synthetase family.

The protein resides in the cytoplasm. It carries out the reaction tRNA(Leu) + L-leucine + ATP = L-leucyl-tRNA(Leu) + AMP + diphosphate. The protein is Leucine--tRNA ligase of Borrelia turicatae (strain 91E135).